A 554-amino-acid chain; its full sequence is CTP synthase (554 aa).

Residues 1-265 form an amidoligase domain region; it reads MTPLIFVTGG…DELVIDQFKL (265 aa). Residue Ser13 participates in CTP binding. Residue Ser13 coordinates UTP. ATP-binding positions include 14–19 and Asp71; that span reads SLGKGI. The Mg(2+) site is built by Asp71 and Glu139. CTP contacts are provided by residues 146–148, 186–191, and Lys222; these read DIE and KTKPTQ. UTP-binding positions include 186 to 191 and Lys222; that span reads KTKPTQ. One can recognise a Glutamine amidotransferase type-1 domain in the interval 292-545; the sequence is TIAVVGKYVD…VRAAREKKAG (254 aa). Gly353 contacts L-glutamine. The Nucleophile; for glutamine hydrolysis role is filled by Cys380. L-glutamine is bound by residues 381–384, Glu404, and Arg471; that span reads YGMQ. Active-site residues include His518 and Glu520.

Belongs to the CTP synthase family. As to quaternary structure, homotetramer.

It carries out the reaction UTP + L-glutamine + ATP + H2O = CTP + L-glutamate + ADP + phosphate + 2 H(+). The catalysed reaction is L-glutamine + H2O = L-glutamate + NH4(+). It catalyses the reaction UTP + NH4(+) + ATP = CTP + ADP + phosphate + 2 H(+). It functions in the pathway pyrimidine metabolism; CTP biosynthesis via de novo pathway; CTP from UDP: step 2/2. With respect to regulation, allosterically activated by GTP, when glutamine is the substrate; GTP has no effect on the reaction when ammonia is the substrate. The allosteric effector GTP functions by stabilizing the protein conformation that binds the tetrahedral intermediate(s) formed during glutamine hydrolysis. Inhibited by the product CTP, via allosteric rather than competitive inhibition. Functionally, catalyzes the ATP-dependent amination of UTP to CTP with either L-glutamine or ammonia as the source of nitrogen. Regulates intracellular CTP levels through interactions with the four ribonucleotide triphosphates. The polypeptide is CTP synthase (Xanthomonas campestris pv. campestris (strain B100)).